The following is a 218-amino-acid chain: Peptide methionine sulfoxide reductase MsrA (218 aa).

Cys-57 is a catalytic residue.

The protein belongs to the MsrA Met sulfoxide reductase family.

It carries out the reaction L-methionyl-[protein] + [thioredoxin]-disulfide + H2O = L-methionyl-(S)-S-oxide-[protein] + [thioredoxin]-dithiol. It catalyses the reaction [thioredoxin]-disulfide + L-methionine + H2O = L-methionine (S)-S-oxide + [thioredoxin]-dithiol. In terms of biological role, has an important function as a repair enzyme for proteins that have been inactivated by oxidation. Catalyzes the reversible oxidation-reduction of methionine sulfoxide in proteins to methionine. The sequence is that of Peptide methionine sulfoxide reductase MsrA from Brucella abortus (strain S19).